The following is a 299-amino-acid chain: Bifunctional protein FolD 2 (299 aa).

Belongs to the tetrahydrofolate dehydrogenase/cyclohydrolase family. Homodimer.

It catalyses the reaction (6R)-5,10-methylene-5,6,7,8-tetrahydrofolate + NADP(+) = (6R)-5,10-methenyltetrahydrofolate + NADPH. The enzyme catalyses (6R)-5,10-methenyltetrahydrofolate + H2O = (6R)-10-formyltetrahydrofolate + H(+). It participates in one-carbon metabolism; tetrahydrofolate interconversion. Catalyzes the oxidation of 5,10-methylenetetrahydrofolate to 5,10-methenyltetrahydrofolate and then the hydrolysis of 5,10-methenyltetrahydrofolate to 10-formyltetrahydrofolate. The chain is Bifunctional protein FolD 2 (FOLD2) from Arabidopsis thaliana (Mouse-ear cress).